The sequence spans 315 residues: Porphobilinogen deaminase (315 aa).

At Cys245 the chain carries S-(dipyrrolylmethanemethyl)cysteine.

The protein belongs to the HMBS family. Monomer. It depends on dipyrromethane as a cofactor.

The catalysed reaction is 4 porphobilinogen + H2O = hydroxymethylbilane + 4 NH4(+). It participates in porphyrin-containing compound metabolism; protoporphyrin-IX biosynthesis; coproporphyrinogen-III from 5-aminolevulinate: step 2/4. The protein operates within porphyrin-containing compound metabolism; chlorophyll biosynthesis. In terms of biological role, tetrapolymerization of the monopyrrole PBG into the hydroxymethylbilane pre-uroporphyrinogen in several discrete steps. This chain is Porphobilinogen deaminase, found in Prochlorococcus marinus (strain NATL2A).